Here is a 429-residue protein sequence, read N- to C-terminus: E3 ubiquitin-protein ligase ZNRF4 (429 aa).

The signal sequence occupies residues Met-1 to Ala-27. Over Val-28–Pro-250 the chain is Lumenal. The segment at Pro-30 to Lys-67 is disordered. The segment covering Pro-37–Pro-49 has biased composition (basic residues). Asn-107, Asn-152, and Asn-229 each carry an N-linked (GlcNAc...) asparagine glycan. Residues Gly-151–Arg-223 form the PA domain. A helical membrane pass occupies residues Val-251–Val-271. Residues Leu-272–Gln-429 lie on the Cytoplasmic side of the membrane. An RING-type; atypical zinc finger spans residues Cys-309 to Lys-352.

Interacts with CANX.

It localises to the endoplasmic reticulum membrane. It catalyses the reaction S-ubiquitinyl-[E2 ubiquitin-conjugating enzyme]-L-cysteine + [acceptor protein]-L-lysine = [E2 ubiquitin-conjugating enzyme]-L-cysteine + N(6)-ubiquitinyl-[acceptor protein]-L-lysine.. The protein operates within protein modification; protein ubiquitination. E3 ubiquitin-protein ligase that acts as a negative regulator of NOD2 signaling by mediating ubiquitination and degradation of RIPK2. Also catalyzes ubiquitination and proteasomal degradation of CANX within the endoplasmic reticulum. Could have a role in spermatogenesis. This chain is E3 ubiquitin-protein ligase ZNRF4, found in Homo sapiens (Human).